A 321-amino-acid polypeptide reads, in one-letter code: Transaldolase (321 aa).

Lys-132 (schiff-base intermediate with substrate) is an active-site residue.

The protein belongs to the transaldolase family. Type 1 subfamily. Homodimer.

The protein localises to the cytoplasm. The enzyme catalyses D-sedoheptulose 7-phosphate + D-glyceraldehyde 3-phosphate = D-erythrose 4-phosphate + beta-D-fructose 6-phosphate. It participates in carbohydrate degradation; pentose phosphate pathway; D-glyceraldehyde 3-phosphate and beta-D-fructose 6-phosphate from D-ribose 5-phosphate and D-xylulose 5-phosphate (non-oxidative stage): step 2/3. Its function is as follows. Transaldolase is important for the balance of metabolites in the pentose-phosphate pathway. In Rhizobium etli (strain ATCC 51251 / DSM 11541 / JCM 21823 / NBRC 15573 / CFN 42), this protein is Transaldolase.